Here is a 342-residue protein sequence, read N- to C-terminus: Global transcription regulator FGP1 (342 aa).

The interval 91–113 (FSPGEKKRASKKPKKQAGVAKAY) is disordered.

This sequence belongs to the MIT1/WOR1 family.

The protein resides in the nucleus. In terms of biological role, global transcriptional regulator of pathogenicity. Regulates many genes during growth in putrescine medium and during infection. Involved in the developmental processes of conidium formation and sexual reproduction and modulates a morphological change that accompanies mycotoxin production. This is Global transcription regulator FGP1 from Gibberella zeae (strain ATCC MYA-4620 / CBS 123657 / FGSC 9075 / NRRL 31084 / PH-1) (Wheat head blight fungus).